Reading from the N-terminus, the 630-residue chain is Plastin-1 (630 aa).

Met1 carries the N-acetylmethionine modification. 2 consecutive EF-hand domains span residues 11–46 (EELEELQEAFNKIDIDNSGYVSDYELQDLFKEASLP) and 51–86 (KVREIVEKILAVADNNKDSRISFEEFVSLMQELKSK). Residues Asp24, Asp26, Ser28, Tyr30, Glu35, Asp64, Asn66, Asp68, Arg70, and Glu75 each coordinate Ca(2+). 2 actin-binding regions span residues 108–381 (TSSI…GLHK) and 382–626 (PDNN…GKGL). Calponin-homology (CH) domains follow at residues 122–238 (EEEK…KVGL), 266–377 (LSPE…NTYP), 396–505 (SKEE…RRYT), and 517–626 (KVND…GKGL).

Monomer. Phosphorylated.

It is found in the cytoplasm. The protein resides in the cell projection. The protein localises to the stereocilium. Functionally, actin-bundling protein. In the inner ear, it is required for stereocilia formation. Mediates liquid packing of actin filaments that is necessary for stereocilia to grow to their proper dimensions. The sequence is that of Plastin-1 (PLS1) from Bos taurus (Bovine).